A 399-amino-acid polypeptide reads, in one-letter code: G2/mitotic-specific cyclin-B2 (399 aa).

The tract at residues 58 to 78 is disordered; sequence PVKATKGPGKMTNTVVPPKPP.

Belongs to the cyclin family. Cyclin AB subfamily. As to quaternary structure, interacts with the CDK1 protein kinase to form a serine/threonine kinase holoenzyme complex also known as maturation promoting factor (MPF). The cyclin subunit imparts substrate specificity to the complex.

Functionally, essential for the control of the cell cycle at the G2/M (mitosis) transition. In Gallus gallus (Chicken), this protein is G2/mitotic-specific cyclin-B2 (CCNB2).